Reading from the N-terminus, the 434-residue chain is ATP-dependent protease ATPase subunit HslU (434 aa).

ATP is bound by residues Val18, Gly60–Glu65, Asp247, Glu312, and Arg384.

The protein belongs to the ClpX chaperone family. HslU subfamily. In terms of assembly, a double ring-shaped homohexamer of HslV is capped on each side by a ring-shaped HslU homohexamer. The assembly of the HslU/HslV complex is dependent on binding of ATP.

It localises to the cytoplasm. Functionally, ATPase subunit of a proteasome-like degradation complex; this subunit has chaperone activity. The binding of ATP and its subsequent hydrolysis by HslU are essential for unfolding of protein substrates subsequently hydrolyzed by HslV. HslU recognizes the N-terminal part of its protein substrates and unfolds these before they are guided to HslV for hydrolysis. This Bradyrhizobium sp. (strain BTAi1 / ATCC BAA-1182) protein is ATP-dependent protease ATPase subunit HslU.